Consider the following 330-residue polypeptide: 4,5-dihydroxyphthalate decarboxylase (330 aa).

The protein to P.putida DHP decarboxylase.

The catalysed reaction is 4,5-dihydroxyphthalate + H(+) = 3,4-dihydroxybenzoate + CO2. The protein operates within xenobiotic degradation; phthalate degradation; 3,4-dihydroxybenzoate from phthalate: step 3/3. The sequence is that of 4,5-dihydroxyphthalate decarboxylase (phtD) from Comamonas testosteroni (Pseudomonas testosteroni).